Consider the following 601-residue polypeptide: Threonine dehydratase (601 aa).

A chloroplast-targeting transit peptide spans 1-51 (MEVLCQAPAGNSNFACNPKFTAIRTRAISSNDTFKVISSTGNNKKMKGAIR). 2 consecutive ACT-like domains span residues 427–499 (ALLA…NLTN) and 521–592 (IFCQ…IESL).

It belongs to the serine/threonine dehydratase family. Pyridoxal 5'-phosphate serves as cofactor.

Its subcellular location is the plastid. The protein resides in the chloroplast. It catalyses the reaction L-threonine = 2-oxobutanoate + NH4(+). It functions in the pathway amino-acid biosynthesis; L-isoleucine biosynthesis; 2-oxobutanoate from L-threonine: step 1/1. Catalyzes the conversion of threonine to alpha-keto butyrate in isoleucine (Ile) biosynthesis. Required for JA-Ile biosynthesis, a signaling molecule involved in defense and resistance to the herbivore Manduca sexta caterpillars. The protein is Threonine dehydratase of Nicotiana attenuata (Coyote tobacco).